The primary structure comprises 123 residues: Large ribosomal subunit protein bL17 (123 aa).

This sequence belongs to the bacterial ribosomal protein bL17 family. Part of the 50S ribosomal subunit. Contacts protein L32.

This is Large ribosomal subunit protein bL17 from Mycoplasma genitalium (strain ATCC 33530 / DSM 19775 / NCTC 10195 / G37) (Mycoplasmoides genitalium).